A 319-amino-acid chain; its full sequence is Pantothenate kinase (319 aa).

96–103 lines the ATP pocket; sequence GSVAVGKS.

Belongs to the prokaryotic pantothenate kinase family.

The protein resides in the cytoplasm. It carries out the reaction (R)-pantothenate + ATP = (R)-4'-phosphopantothenate + ADP + H(+). It participates in cofactor biosynthesis; coenzyme A biosynthesis; CoA from (R)-pantothenate: step 1/5. This is Pantothenate kinase (coaA) from Bacillus subtilis (strain 168).